We begin with the raw amino-acid sequence, 332 residues long: Glycerol-3-phosphate dehydrogenase [NAD(P)+] (332 aa).

NADPH is bound by residues S11, F12, K32, and K106. Positions 106, 137, and 139 each coordinate sn-glycerol 3-phosphate. A141 lines the NADPH pocket. The sn-glycerol 3-phosphate site is built by K192, D245, S255, R256, and N257. The active-site Proton acceptor is the K192. Position 256 (R256) interacts with NADPH. NADPH-binding residues include V280 and E282.

The protein belongs to the NAD-dependent glycerol-3-phosphate dehydrogenase family.

The protein localises to the cytoplasm. The catalysed reaction is sn-glycerol 3-phosphate + NAD(+) = dihydroxyacetone phosphate + NADH + H(+). It carries out the reaction sn-glycerol 3-phosphate + NADP(+) = dihydroxyacetone phosphate + NADPH + H(+). It participates in membrane lipid metabolism; glycerophospholipid metabolism. Functionally, catalyzes the reduction of the glycolytic intermediate dihydroxyacetone phosphate (DHAP) to sn-glycerol 3-phosphate (G3P), the key precursor for phospholipid synthesis. In Staphylococcus epidermidis (strain ATCC 35984 / DSM 28319 / BCRC 17069 / CCUG 31568 / BM 3577 / RP62A), this protein is Glycerol-3-phosphate dehydrogenase [NAD(P)+].